A 461-amino-acid chain; its full sequence is L-serine dehydratase (461 aa).

It belongs to the iron-sulfur dependent L-serine dehydratase family. It depends on [4Fe-4S] cluster as a cofactor.

It catalyses the reaction L-serine = pyruvate + NH4(+). The protein operates within carbohydrate biosynthesis; gluconeogenesis. In Mycobacterium bovis (strain ATCC BAA-935 / AF2122/97), this protein is L-serine dehydratase (sdaA).